A 178-amino-acid polypeptide reads, in one-letter code: Cell division protein SepF (178 aa).

Residues 21 to 46 (YESEQSVATHHDEERPQAQEREERRA) show a composition bias toward basic and acidic residues. The segment at 21–65 (YESEQSVATHHDEERPQAQEREERRAPAPVREVVREMPTVDAEEE) is disordered.

It belongs to the SepF family. Homodimer. Interacts with FtsZ.

Its subcellular location is the cytoplasm. In terms of biological role, cell division protein that is part of the divisome complex and is recruited early to the Z-ring. Probably stimulates Z-ring formation, perhaps through the cross-linking of FtsZ protofilaments. Its function overlaps with FtsA. The sequence is that of Cell division protein SepF from Paenarthrobacter aurescens (strain TC1).